The following is a 44-amino-acid chain: MARGDYYSDDGTTDKEMCPRCGDTFLAAHDDRQVCGRCGYTEWE.

Zn(2+) is bound by residues Cys18, Cys21, Cys35, and Cys38. A C4-type zinc finger spans residues 18–38 (CPRCGDTFLAAHDDRQVCGRC).

Belongs to the eukaryotic ribosomal protein eS31 family. In terms of assembly, part of the 30S ribosomal subunit. Requires Zn(2+) as cofactor.

This Halobacterium salinarum (strain ATCC 29341 / DSM 671 / R1) protein is Small ribosomal subunit protein eS31.